We begin with the raw amino-acid sequence, 281 residues long: MTAQILDGKTLAQQFEQEMRLRVDVLKAKANGHTPILATILVGADPASATYVKMKGNACQRVGMESVAIELSEETTTAQLLAKIDELNNNQDVHGILLQHPVPAQIDERACFDAISLEKDVDGVTCLGFGRMSMGEAAYGCATPKGIMRLLEHYQVELEGKHAVVVGRSAILGKPMAMMMLEANATVTICHSRTQNLPELVKQADIVVGAVGKPEFIKADWIKDGAVVVDAGFHPERCGDIELAPLVDRVAAYTPVPGGVGPMTINTLIFQTLQSGEKAFG.

Residues 167–169 and Ser-192 each bind NADP(+); that span reads GRS.

This sequence belongs to the tetrahydrofolate dehydrogenase/cyclohydrolase family. As to quaternary structure, homodimer.

It catalyses the reaction (6R)-5,10-methylene-5,6,7,8-tetrahydrofolate + NADP(+) = (6R)-5,10-methenyltetrahydrofolate + NADPH. The enzyme catalyses (6R)-5,10-methenyltetrahydrofolate + H2O = (6R)-10-formyltetrahydrofolate + H(+). The protein operates within one-carbon metabolism; tetrahydrofolate interconversion. Functionally, catalyzes the oxidation of 5,10-methylenetetrahydrofolate to 5,10-methenyltetrahydrofolate and then the hydrolysis of 5,10-methenyltetrahydrofolate to 10-formyltetrahydrofolate. The protein is Bifunctional protein FolD of Alcanivorax borkumensis (strain ATCC 700651 / DSM 11573 / NCIMB 13689 / SK2).